The following is a 123-amino-acid chain: Small ribosomal subunit protein uS12cz/uS12cy (123 aa).

It belongs to the universal ribosomal protein uS12 family. In terms of assembly, part of the 30S ribosomal subunit.

Its subcellular location is the plastid. It is found in the chloroplast. In terms of biological role, with S4 and S5 plays an important role in translational accuracy. Located at the interface of the 30S and 50S subunits. This Gossypium barbadense (Sea Island cotton) protein is Small ribosomal subunit protein uS12cz/uS12cy (rps12-A).